We begin with the raw amino-acid sequence, 419 residues long: UDP-N-acetylglucosamine 1-carboxyvinyltransferase (419 aa).

Residue 22–23 coordinates phosphoenolpyruvate; sequence KN. Arg95 serves as a coordination point for UDP-N-acetyl-alpha-D-glucosamine. Residue Cys119 is the Proton donor of the active site. Cys119 bears the 2-(S-cysteinyl)pyruvic acid O-phosphothioketal mark. UDP-N-acetyl-alpha-D-glucosamine is bound by residues 164–167, Asp308, and Ile330; that span reads KVSV.

Belongs to the EPSP synthase family. MurA subfamily.

The protein localises to the cytoplasm. It catalyses the reaction phosphoenolpyruvate + UDP-N-acetyl-alpha-D-glucosamine = UDP-N-acetyl-3-O-(1-carboxyvinyl)-alpha-D-glucosamine + phosphate. It participates in cell wall biogenesis; peptidoglycan biosynthesis. Its function is as follows. Cell wall formation. Adds enolpyruvyl to UDP-N-acetylglucosamine. The protein is UDP-N-acetylglucosamine 1-carboxyvinyltransferase of Rickettsia prowazekii (strain Madrid E).